The following is a 460-amino-acid chain: uncharacterized protein (460 aa).

The segment at residues 1–33 (MKESNSRREFLSQSGKMVTAAALFGTSVPLAHA) is a signal peptide (tat-type signal).

Belongs to the metallo-dependent hydrolases superfamily. Exported by the Tat system. The position of the signal peptide cleavage has not been experimentally proven. Can also be exported by the Sec system.

This is an uncharacterized protein from Escherichia coli (strain K12).